Reading from the N-terminus, the 404-residue chain is Corticosteroid-binding globulin (404 aa).

The N-terminal stretch at 1-30 (MAWSTRTMMSLALYTCFLWLLTSGLKTVQS) is a signal peptide. N-linked (GlcNAc...) asparagine glycosylation is found at Asn95 and Asn225. Residue Gln253 coordinates cortisol. Asn259 is a glycosylation site (N-linked (GlcNAc...) asparagine). Glu285 is a binding site for cortisol. N-linked (GlcNAc...) asparagine glycosylation is present at Asn326. Trp392 contacts cortisol.

This sequence belongs to the serpin family. Expressed by the liver; secreted in plasma.

It localises to the secreted. Its function is as follows. Major transport protein for glucocorticoids and progestins in the blood of almost all vertebrate species. The protein is Corticosteroid-binding globulin (SERPINA6) of Mesocricetus auratus (Golden hamster).